Reading from the N-terminus, the 251-residue chain is Capsid protein (251 aa).

The interval 1-27 (MPKRDLPWRSMPGTSKTSRNANYSPRA) is disordered. A Bipartite nuclear localization signal motif is present at residues 3–20 (KRDLPWRSMPGTSKTSRN). The span at 12-23 (PGTSKTSRNANY) shows a compositional bias: polar residues. Positions 35–49 (KASEWVHRPMYRKPR) match the Nuclear localization signal motif. The segment at 63 to 80 (CEGPCKVQSYEQRHDISH) is a zinc-finger region. A Nuclear export signal motif is present at residues 96-117 (ITHRVGKRFCVKSVYILGKIWM). A Bipartite nuclear localization signal motif is present at residues 195-242 (KRFWKVNNHVVYNHQEAGKYENHTENALLLYMACTHASNPVYATLKIR).

The protein belongs to the geminiviridae capsid protein family. As to quaternary structure, homomultimer. Binds to single-stranded and double-stranded viral DNA. Interacts (via nuclear localization signals) with host importin alpha-1a.

Its subcellular location is the virion. It is found in the host nucleus. Its function is as follows. Encapsidates the viral DNA into characteristic twinned ('geminate') particles. Binds the genomic viral ssDNA and shuttles it into and out of the cell nucleus. The CP of bipartite geminiviruses is not required for cell-to-cell or systemic movement. The sequence is that of Capsid protein from Abutilon (Upland cotton).